A 267-amino-acid chain; its full sequence is Proteasome assembly chaperone 2 (267 aa).

Belongs to the PSMG2 family. As to quaternary structure, component of the 20S proteasome chaperone. Forms a heterodimer with PBA1 that binds to proteasome precursors.

It localises to the cytoplasm. Its function is as follows. Involved in 20S proteasome assembly. Required for maximal proteasome activity. Affects the chymotrypsin-like activity of the proteasome. Can be degraded by the proteasome. Involved in the endoplasmic reticulum-associated degradation (ERAD). In Saccharomyces cerevisiae (strain ATCC 204508 / S288c) (Baker's yeast), this protein is Proteasome assembly chaperone 2 (ADD66).